Consider the following 439-residue polypeptide: Divalent metal cation transporter MntH (439 aa).

Helical transmembrane passes span 32-52, 67-87, 121-141, 144-164, 173-193, 214-234, 261-281, 301-321, 350-370, 371-391, and 406-426; these read GASMLLPFAGPAVVVSVAYMD, GYALLWVVLLANVVAMLFQSL, IAAMATDLAAFLGGAIGLSLL, MPLLGGMVVTAIVTYGLLLLE, LAIGALVGIIGLSYLAELFIT, ALLIAVGIVGATVMPHALFLH, VVVALAIAGLINMAMVIMAAG, APLLGIGAAGVFLLSLIASGI, AVTMAPSFAVVALGVNVTQAL, VLSQVVLSLALPLPMAALLWF, and FIAVIATLAACAVLAFNAVLI.

It belongs to the NRAMP family.

The protein resides in the cell inner membrane. H(+)-stimulated, divalent metal cation uptake system. The chain is Divalent metal cation transporter MntH from Verminephrobacter eiseniae (strain EF01-2).